An 89-amino-acid chain; its full sequence is Small ribosomal subunit protein bS20 (89 aa).

A disordered region spans residues 1–28; the sequence is MTLANIKSAKKRAIQSEKRRQHNASQRS.

This sequence belongs to the bacterial ribosomal protein bS20 family.

Binds directly to 16S ribosomal RNA. This Pasteurella multocida (strain Pm70) protein is Small ribosomal subunit protein bS20.